The chain runs to 869 residues: Bifunctional uridylyltransferase/uridylyl-removing enzyme (869 aa).

The interval 1 to 332 is uridylyltransferase; sequence MTATPADRPD…QFDGEAVPVQ (332 aa). The segment at 333–691 is uridylyl-removing; sequence LDAGFSLRRG…RRAVPDNDAL (359 aa). Residues 450 to 572 form the HD domain; the sequence is VDQHTLMVLR…VGTRERLDYL (123 aa). ACT domains follow at residues 692 to 771 and 798 to 869; these read EVFV…PSRR and RISL…LDPT.

This sequence belongs to the GlnD family. It depends on Mg(2+) as a cofactor.

The catalysed reaction is [protein-PII]-L-tyrosine + UTP = [protein-PII]-uridylyl-L-tyrosine + diphosphate. It catalyses the reaction [protein-PII]-uridylyl-L-tyrosine + H2O = [protein-PII]-L-tyrosine + UMP + H(+). Its activity is regulated as follows. Uridylyltransferase (UTase) activity is inhibited by glutamine, while glutamine activates uridylyl-removing (UR) activity. Its function is as follows. Modifies, by uridylylation and deuridylylation, the PII regulatory proteins (GlnB and homologs), in response to the nitrogen status of the cell that GlnD senses through the glutamine level. Under low glutamine levels, catalyzes the conversion of the PII proteins and UTP to PII-UMP and PPi, while under higher glutamine levels, GlnD hydrolyzes PII-UMP to PII and UMP (deuridylylation). Thus, controls uridylylation state and activity of the PII proteins, and plays an important role in the regulation of nitrogen assimilation and metabolism. The protein is Bifunctional uridylyltransferase/uridylyl-removing enzyme of Xanthomonas campestris pv. campestris (strain B100).